The following is a 123-amino-acid chain: MAALGTVLFTGVRRLHCSVAAWAGGQWRLQQGLAANPSGYGPLTELPDWSYADGRPAPPMKGQLRRKAERETFARRVVLLSQEMDAGLQAWQLRQQKLQEEQRKQENALKPKGASLKSPLPSQ.

The N-terminal 23 residues, 1-23 (MAALGTVLFTGVRRLHCSVAAWA), are a transit peptide targeting the mitochondrion. The segment covering 99–109 (QEEQRKQENAL) has biased composition (basic and acidic residues). The segment at 99 to 123 (QEEQRKQENALKPKGASLKSPLPSQ) is disordered.

This sequence belongs to the mitochondrion-specific ribosomal protein mL52 family. As to quaternary structure, component of the mitochondrial large ribosomal subunit (mt-LSU). Mature mammalian 55S mitochondrial ribosomes consist of a small (28S) and a large (39S) subunit. The 28S small subunit contains a 12S ribosomal RNA (12S mt-rRNA) and 30 different proteins. The 39S large subunit contains a 16S rRNA (16S mt-rRNA), a copy of mitochondrial valine transfer RNA (mt-tRNA(Val)), which plays an integral structural role, and 52 different proteins. mL52 connects the central protuberance to the body of the ribosome.

The protein localises to the mitochondrion. The polypeptide is Large ribosomal subunit protein mL52 (MRPL52) (Homo sapiens (Human)).